A 288-amino-acid polypeptide reads, in one-letter code: Glycine--tRNA ligase alpha subunit (288 aa).

The protein belongs to the class-II aminoacyl-tRNA synthetase family. As to quaternary structure, tetramer of two alpha and two beta subunits.

Its subcellular location is the cytoplasm. The enzyme catalyses tRNA(Gly) + glycine + ATP = glycyl-tRNA(Gly) + AMP + diphosphate. The sequence is that of Glycine--tRNA ligase alpha subunit from Rickettsia massiliae (strain Mtu5).